Here is a 274-residue protein sequence, read N- to C-terminus: Glutamate--cysteine ligase regulatory subunit (274 aa).

Lys-263 bears the N6-acetyllysine mark.

It belongs to the aldo/keto reductase family. Glutamate--cysteine ligase light chain subfamily. As to quaternary structure, heterodimer of a catalytic heavy chain and a regulatory light chain. In terms of tissue distribution, in all tissues examined. Highest levels in skeletal muscle.

It functions in the pathway sulfur metabolism; glutathione biosynthesis; glutathione from L-cysteine and L-glutamate: step 1/2. This is Glutamate--cysteine ligase regulatory subunit (GCLM) from Homo sapiens (Human).